Consider the following 95-residue polypeptide: Acylphosphatase (95 aa).

The Acylphosphatase-like domain maps to 5–93 (RAHLYIKGKV…GEFQDFRILP (89 aa)). Active-site residues include R20 and N38.

Belongs to the acylphosphatase family.

It catalyses the reaction an acyl phosphate + H2O = a carboxylate + phosphate + H(+). In Pyrobaculum islandicum (strain DSM 4184 / JCM 9189 / GEO3), this protein is Acylphosphatase (acyP).